The following is a 290-amino-acid chain: 1D-myo-inositol 2-acetamido-2-deoxy-alpha-D-glucopyranoside deacetylase (290 aa).

The Zn(2+) site is built by His17, Asp20, and His150.

It belongs to the MshB deacetylase family. Requires Zn(2+) as cofactor.

It carries out the reaction 1D-myo-inositol 2-acetamido-2-deoxy-alpha-D-glucopyranoside + H2O = 1D-myo-inositol 2-amino-2-deoxy-alpha-D-glucopyranoside + acetate. Catalyzes the deacetylation of 1D-myo-inositol 2-acetamido-2-deoxy-alpha-D-glucopyranoside (GlcNAc-Ins) in the mycothiol biosynthesis pathway. The chain is 1D-myo-inositol 2-acetamido-2-deoxy-alpha-D-glucopyranoside deacetylase from Corynebacterium glutamicum (strain R).